Here is an 81-residue protein sequence, read N- to C-terminus: MDHQTLAAHEAVDLHEIVNFKTLCIAKSKLMQGLVFDQELKDLMEKDVQQSIQDLTELQAVYERASFQAPVPQSRPTPIIN.

The protein belongs to the CotF family.

The protein localises to the spore coat. The sequence is that of Spore coat protein F-like protein YraG (yraG) from Bacillus subtilis (strain 168).